The sequence spans 276 residues: MLLRFTKMHGLGNDFMVLDLVSQHAHIQPKHAKQWGDRNTGIGFDQLLIVEAPSNPDVDFRYRIFNADGSEVEQCGNGARCFARFVLDKRLTAKKRIRVETKGGIIELDVRNDGQVCVDMGPPRFVPADIPFIADEQALSYPLEVDGQVHQIAAVSMGNPHSVLRVDDVRTAPVHELGPKIEHHPRFPQRVNAGFIQVVDRHRANLRVWERGAGETQACGTGACAAAVAAIAQGWMDSPVTIDLPGGRLSIEWAGPGKPVLMTGPAVRVFEGQVRL.

Residues N13, Q46, and N66 each contribute to the substrate site. Residue C75 is the Proton donor of the active site. Substrate-binding positions include 76 to 77 (GN), N159, N192, and 210 to 211 (ER). The Proton acceptor role is filled by C219. 220 to 221 (GT) is a substrate binding site.

This sequence belongs to the diaminopimelate epimerase family. Homodimer.

The protein localises to the cytoplasm. It carries out the reaction (2S,6S)-2,6-diaminopimelate = meso-2,6-diaminopimelate. It participates in amino-acid biosynthesis; L-lysine biosynthesis via DAP pathway; DL-2,6-diaminopimelate from LL-2,6-diaminopimelate: step 1/1. Its function is as follows. Catalyzes the stereoinversion of LL-2,6-diaminopimelate (L,L-DAP) to meso-diaminopimelate (meso-DAP), a precursor of L-lysine and an essential component of the bacterial peptidoglycan. In Pseudomonas entomophila (strain L48), this protein is Diaminopimelate epimerase.